A 299-amino-acid polypeptide reads, in one-letter code: DNA-binding transcriptional activator HetR (299 aa).

S152 is an active-site residue.

It belongs to the peptidase S48 family. Homodimer; disulfide-linked.

In terms of biological role, controls heterocyst differentiation. Dimerization is required for DNA-binding. Has both a protease and a DNA-binding activity. Increased expression leads to more heterocysts than usual. The chain is DNA-binding transcriptional activator HetR from Nostoc punctiforme (strain ATCC 29133 / PCC 73102).